Here is a 71-residue protein sequence, read N- to C-terminus: Large ribosomal subunit protein bL31 (71 aa).

Cys16, Cys18, Cys37, and Cys40 together coordinate Zn(2+).

The protein belongs to the bacterial ribosomal protein bL31 family. Type A subfamily. In terms of assembly, part of the 50S ribosomal subunit. Zn(2+) serves as cofactor.

Functionally, binds the 23S rRNA. The polypeptide is Large ribosomal subunit protein bL31 (Pseudoalteromonas translucida (strain TAC 125)).